The primary structure comprises 201 residues: Small ribosomal subunit protein uS4c (201 aa).

The region spanning 91–153 (MRLDNIVFRL…NASKKIVETN (63 aa)) is the S4 RNA-binding domain.

Belongs to the universal ribosomal protein uS4 family. Part of the 30S ribosomal subunit. Contacts protein S5. The interaction surface between S4 and S5 is involved in control of translational fidelity.

Its subcellular location is the plastid. It is found in the cyanelle. In terms of biological role, one of the primary rRNA binding proteins, it binds directly to 16S rRNA where it nucleates assembly of the body of the 30S subunit. Its function is as follows. With S5 and S12 plays an important role in translational accuracy. In Cyanophora paradoxa, this protein is Small ribosomal subunit protein uS4c (rps4).